The following is a 252-amino-acid chain: Maintenance of carboxysome distribution protein A (252 aa).

14 residues coordinate ATP: Gly11, Gly12, Gly14, Lys15, Thr16, Thr17, Gln41, Glu147, Lys151, Phe182, Arg183, Leu216, Glu217, and Ser218. Thr16 lines the Mg(2+) pocket.

This sequence belongs to the ParA family. McdA subfamily. As to quaternary structure, self-associates (probably a homodimer), interacts with McdB probably via the C-terminus of both proteins. Shows no signs of filament formation. Homodimerizes in the presence of ATP, making extra nucleotide contacts than with ADP or AMP-PNP. Each subunit binds 1 ATP molecule; Glu-147, Lys-151 and Arg-183 cross the dimer interface to contact ATP in the other subunit, while Phe-182, Arg-183 and Phe-221 stack with the adenine base in their own subunit.

It localises to the cytoplasm. It is found in the nucleoid. It carries out the reaction ATP + H2O = ADP + phosphate + H(+). McdA and McdB together mediate carboxysome (Cb) spacing, size, ultrastructure and probably inheritance in the cell. Together they prevent Cb aggregation. McdA is an ATPase that forms dynamic gradients on the nucleoid in response to adapter protein McdB, which associates with carboxysomes. The interplay between McdA gradients on the nucleoid and McdB-bound carboxysomes result in the equal spacing of Cbs along the cell length. Binds nucleoid DNA in an ATP-dependent manner; neither ADP nor ATP-gamma-S support DNA binding. Upon ATP-binding dimerizes and binds nucleoid DNA; the (McdA-ATP)2 dimer transiently binds McdB-bound Cbs. McdA's ATPase activity is stimulated 2-fold by DNA and McdB; ATP hydrolysis causes McdA release from DNA. Overexpression leads to loss of McdA oscillation, diffuse nucleoid staining by McdA with formation of large carboxysome aggregates that are in regions depleted of McdA; McdA remains nucleoid-associated. In terms of biological role, mutagenesis studies (characterized in vivo) suggest ATP binding, protein dimerization and a conformational change are necessary for nucleoid DNA-binding and binding to McdB-bound Cbs, which tethers Cbs to the nucleoid. Eventual McdB-stimulated ATP hydrolysis causes de-dimerization of McdA which no longer binds the nucleoid and releases McdB and Cbs. McdB-bound Cbs then move to a region of higher McdA concentration, distributing Cbs across the nucleoid. Functionally, incorrect positioning (aggregation) of carboxysomes results in reduced CO(2) fixation by encapsulated ribulose-1,5-bisphosphate carboxylase (RuBisCO, cbbL/cbbS), which leads to slower growth, cell elongation, asymmetric cell division and an increase in RuBisCO levels. The protein is Maintenance of carboxysome distribution protein A of Synechococcus elongatus (strain ATCC 33912 / PCC 7942 / FACHB-805) (Anacystis nidulans R2).